A 164-amino-acid chain; its full sequence is Small ribosomal subunit protein uS5 (164 aa).

The S5 DRBM domain occupies Leu10–Val73.

The protein belongs to the universal ribosomal protein uS5 family. Part of the 30S ribosomal subunit. Contacts proteins S4 and S8.

With S4 and S12 plays an important role in translational accuracy. In terms of biological role, located at the back of the 30S subunit body where it stabilizes the conformation of the head with respect to the body. The protein is Small ribosomal subunit protein uS5 of Streptococcus gordonii (strain Challis / ATCC 35105 / BCRC 15272 / CH1 / DL1 / V288).